Here is a 387-residue protein sequence, read N- to C-terminus: Protein WHAT'S THIS FACTOR 9, mitochondrial (387 aa).

A mitochondrion-targeting transit peptide spans 1–24 (MLSIRRHAKTVASSCTNLTQKRTY). One can recognise a PORR domain in the interval 32–358 (KRDPYFDNIE…KKYIQLMKNS (327 aa)).

Its subcellular location is the mitochondrion. RNA-binding protein involved in group II intron splicing. Binds specific group II introns and promotes their splicing (e.g. rpl2 and ccmFC). In Arabidopsis thaliana (Mouse-ear cress), this protein is Protein WHAT'S THIS FACTOR 9, mitochondrial.